A 500-amino-acid polypeptide reads, in one-letter code: Glucose-6-phosphate 1-dehydrogenase (500 aa).

NADP(+) is bound by residues 18-25 (GASGDLSK), R52, and K155. D-glucose 6-phosphate-binding positions include K155, 185–189 (HYLGK), E223, and D242. The active-site Proton acceptor is the H247. Position 338 (K338) interacts with NADP(+). A D-glucose 6-phosphate-binding site is contributed by K341. Positions 347, 351, and 373 each coordinate NADP(+). Q375 lines the D-glucose 6-phosphate pocket. NADP(+) is bound by residues 381–383 (YFK), 401–403 (DLT), and Y483.

This sequence belongs to the glucose-6-phosphate dehydrogenase family.

Its subcellular location is the cytoplasm. The protein localises to the cytosol. The catalysed reaction is D-glucose 6-phosphate + NADP(+) = 6-phospho-D-glucono-1,5-lactone + NADPH + H(+). It participates in carbohydrate degradation; pentose phosphate pathway; D-ribulose 5-phosphate from D-glucose 6-phosphate (oxidative stage): step 1/3. Catalyzes the rate-limiting step of the oxidative pentose-phosphate pathway, which represents a route for the dissimilation of carbohydrates besides glycolysis. The main function of this enzyme is to provide reducing power (NADPH) and pentose phosphates for fatty acid and nucleic acid synthesis. The polypeptide is Glucose-6-phosphate 1-dehydrogenase (Schizosaccharomyces pombe (strain 972 / ATCC 24843) (Fission yeast)).